Consider the following 179-residue polypeptide: Large ribosomal subunit protein uL6 (179 aa).

The protein belongs to the universal ribosomal protein uL6 family. In terms of assembly, part of the 50S ribosomal subunit.

Its function is as follows. This protein binds to the 23S rRNA, and is important in its secondary structure. It is located near the subunit interface in the base of the L7/L12 stalk, and near the tRNA binding site of the peptidyltransferase center. In Prochlorococcus marinus (strain MIT 9515), this protein is Large ribosomal subunit protein uL6.